Here is a 303-residue protein sequence, read N- to C-terminus: tRNA dimethylallyltransferase (303 aa).

9–16 contributes to the ATP binding site; that stretch reads GPTASGKS. Residue 11–16 participates in substrate binding; sequence TASGKS. The interval 34–37 is interaction with substrate tRNA; that stretch reads DSKQ.

This sequence belongs to the IPP transferase family. Monomer. Mg(2+) serves as cofactor.

The enzyme catalyses adenosine(37) in tRNA + dimethylallyl diphosphate = N(6)-dimethylallyladenosine(37) in tRNA + diphosphate. Functionally, catalyzes the transfer of a dimethylallyl group onto the adenine at position 37 in tRNAs that read codons beginning with uridine, leading to the formation of N6-(dimethylallyl)adenosine (i(6)A). The polypeptide is tRNA dimethylallyltransferase (Ehrlichia chaffeensis (strain ATCC CRL-10679 / Arkansas)).